Consider the following 106-residue polypeptide: Large ribosomal subunit protein eL42 (106 aa).

It belongs to the eukaryotic ribosomal protein eL42 family.

The chain is Large ribosomal subunit protein eL42 (RPL44) from Eremothecium gossypii (strain ATCC 10895 / CBS 109.51 / FGSC 9923 / NRRL Y-1056) (Yeast).